The following is a 61-amino-acid chain: U-stichotoxin-Hcr1a (61 aa).

An N-terminal signal peptide occupies residues 1–21 (MKPAIFLMLFVAMFLISEGEG). Positions 22 to 31 (FKPKDAPQER) are excised as a propeptide. The residue at position 36 (proline 36) is a Hydroxyproline. 2 cysteine pairs are disulfide-bonded: cysteine 41-cysteine 53 and cysteine 44-cysteine 59.

It belongs to the Hau1a/HC18/HC19 family.

The protein localises to the secreted. It is found in the nematocyst. Functionally, toxin that is lethal to crab. Does not produce the typical symptoms associated with sodium channel toxins in crabs, suggesting that it likely does not act on sodium channels. The polypeptide is U-stichotoxin-Hcr1a (Radianthus crispa (Leathery sea anemone)).